The primary structure comprises 358 residues: MAQAAVERRVFRLSVDEETVVAAGVGALSEAPRAAGGTAYIVHEEALSAEAARLARILEARGVEVLGAVAGGGERVKSLDWVTRLWDLMLQAGVERSTTVYIIGGGALLDAAGFAASTLMRGLSTVNIPSTTLAAFDAAAGGKTGVNLRGKNMVGTFHNPRMVLVEPGIVAGQPDEGYRDGFAELVKHVALSGDREPAASLLPQALARRPAPLARLAFWSLGYKMQVVAGDPRERGLRRILNLGHTIGHALEAASSYTLSHGRSVSIGLAGELELSRRLAGLPRGEAEDVLDMLSTAGLPLEPPPGLAGEAAGLVGLDKKREGGSIVMPLLERLGRPRLSRVPVETVSRLMVELWGGG.

NAD(+) contacts are provided by residues 72–77, 106–110, 130–131, K143, and K151; these read GGERVK, GALLD, and ST. Zn(2+) is bound by residues E184, H245, and H261.

The protein belongs to the sugar phosphate cyclases superfamily. Dehydroquinate synthase family. The cofactor is NAD(+). Co(2+) serves as cofactor. Zn(2+) is required as a cofactor.

The protein resides in the cytoplasm. The enzyme catalyses 7-phospho-2-dehydro-3-deoxy-D-arabino-heptonate = 3-dehydroquinate + phosphate. The protein operates within metabolic intermediate biosynthesis; chorismate biosynthesis; chorismate from D-erythrose 4-phosphate and phosphoenolpyruvate: step 2/7. In terms of biological role, catalyzes the conversion of 3-deoxy-D-arabino-heptulosonate 7-phosphate (DAHP) to dehydroquinate (DHQ). This is 3-dehydroquinate synthase (aroB) from Aeropyrum pernix (strain ATCC 700893 / DSM 11879 / JCM 9820 / NBRC 100138 / K1).